The primary structure comprises 278 residues: Probable CCR4-associated factor 1 homolog 5 (278 aa).

The a divalent metal cation site is built by D30, E32, D145, and D217.

This sequence belongs to the CAF1 family. In terms of assembly, component of the CCR4-NOT complex, at least composed of CRR4 and CAF1 proteins. A divalent metal cation serves as cofactor.

It localises to the nucleus. The protein localises to the cytoplasm. The enzyme catalyses Exonucleolytic cleavage of poly(A) to 5'-AMP.. Functionally, ubiquitous transcription factor required for a diverse set of processes. It is a component of the CCR4 complex involved in the control of gene expression. The sequence is that of Probable CCR4-associated factor 1 homolog 5 (CAF1-5) from Arabidopsis thaliana (Mouse-ear cress).